The following is a 315-amino-acid chain: Thymidylate synthase (315 aa).

Residues Arg-22 and 177–178 (RR) contribute to the dUMP site. Cys-197 acts as the Nucleophile in catalysis. DUMP contacts are provided by residues 217 to 220 (RSAD), Asn-228, and 258 to 260 (HLY). Asp-220 serves as a coordination point for (6R)-5,10-methylene-5,6,7,8-tetrahydrofolate. Residue Ala-314 coordinates (6R)-5,10-methylene-5,6,7,8-tetrahydrofolate.

Belongs to the thymidylate synthase family. Bacterial-type ThyA subfamily. Homodimer.

The protein localises to the cytoplasm. It carries out the reaction dUMP + (6R)-5,10-methylene-5,6,7,8-tetrahydrofolate = 7,8-dihydrofolate + dTMP. Its pathway is pyrimidine metabolism; dTTP biosynthesis. In terms of biological role, catalyzes the reductive methylation of 2'-deoxyuridine-5'-monophosphate (dUMP) to 2'-deoxythymidine-5'-monophosphate (dTMP) while utilizing 5,10-methylenetetrahydrofolate (mTHF) as the methyl donor and reductant in the reaction, yielding dihydrofolate (DHF) as a by-product. This enzymatic reaction provides an intracellular de novo source of dTMP, an essential precursor for DNA biosynthesis. The polypeptide is Thymidylate synthase (Enterococcus faecalis (strain ATCC 700802 / V583)).